Reading from the N-terminus, the 281-residue chain is sn-glycerol-3-phosphate transport system permease protein UgpE (281 aa).

6 helical membrane-spanning segments follow: residues L16 to L36, F85 to F105, F113 to V133, L142 to F162, A202 to I222, and W247 to A267. One can recognise an ABC transmembrane type-1 domain in the interval M77 to M268.

The protein belongs to the binding-protein-dependent transport system permease family. UgpAE subfamily. In terms of assembly, the complex is composed of two ATP-binding proteins (UgpC), two transmembrane proteins (UgpA and UgpE) and a solute-binding protein (UgpB).

Its subcellular location is the cell inner membrane. Its function is as follows. Part of the ABC transporter complex UgpBAEC involved in sn-glycerol-3-phosphate (G3P) import. Probably responsible for the translocation of the substrate across the membrane. The sequence is that of sn-glycerol-3-phosphate transport system permease protein UgpE (ugpE) from Salmonella choleraesuis (strain SC-B67).